The primary structure comprises 239 residues: Host range factor p28 (239 aa).

The region spanning 21 to 131 (YIDEPNDIRL…QSILRGLVNW (111 aa)) is the KilA-N domain. The segment at 170–223 (CGICYEVVYSKRLENDRYFGLLDSCNHIFCITCINIWHKTRRETGASDNCPICR) adopts an RING-type zinc-finger fold.

Belongs to the orthopoxvirus OPG021 family.

The protein localises to the host cytoplasm. Functionally, RING-finger E3 ubiquitin ligase which catalyzes the formation of both 'Lys-48'- and 'Lys-63'-linked polyubiquitin chains. Plays an important role in virulence by acting as an anti-apoptotic factor. This chain is Host range factor p28 (OPG021), found in Homo sapiens (Human).